A 318-amino-acid polypeptide reads, in one-letter code: Thymidylate synthase (318 aa).

Residues R25 and 180 to 181 each bind dUMP; that span reads RR. C200 serves as the catalytic Nucleophile. DUMP is bound by residues 220–223, N231, and 261–263; these read RSAD and HIY. Residue D223 coordinates (6R)-5,10-methylene-5,6,7,8-tetrahydrofolate. Residue A317 coordinates (6R)-5,10-methylene-5,6,7,8-tetrahydrofolate.

This sequence belongs to the thymidylate synthase family. Bacterial-type ThyA subfamily. In terms of assembly, homodimer.

The protein resides in the cytoplasm. It catalyses the reaction dUMP + (6R)-5,10-methylene-5,6,7,8-tetrahydrofolate = 7,8-dihydrofolate + dTMP. Its pathway is pyrimidine metabolism; dTTP biosynthesis. In terms of biological role, catalyzes the reductive methylation of 2'-deoxyuridine-5'-monophosphate (dUMP) to 2'-deoxythymidine-5'-monophosphate (dTMP) while utilizing 5,10-methylenetetrahydrofolate (mTHF) as the methyl donor and reductant in the reaction, yielding dihydrofolate (DHF) as a by-product. This enzymatic reaction provides an intracellular de novo source of dTMP, an essential precursor for DNA biosynthesis. This Ligilactobacillus salivarius (strain UCC118) (Lactobacillus salivarius) protein is Thymidylate synthase.